The sequence spans 122 residues: Basic phospholipase A2 Cdr-13 (122 aa).

Intrachain disulfides connect cysteine 26/cysteine 115, cysteine 28/cysteine 44, cysteine 43/cysteine 95, cysteine 49/cysteine 122, cysteine 50/cysteine 88, cysteine 57/cysteine 81, and cysteine 75/cysteine 86. Tyrosine 27, glycine 29, and glycine 31 together coordinate Ca(2+). Histidine 47 is an active-site residue. Aspartate 48 serves as a coordination point for Ca(2+). Aspartate 89 is an active-site residue.

Requires Ca(2+) as cofactor. As to expression, expressed by the venom gland.

Its subcellular location is the secreted. The catalysed reaction is a 1,2-diacyl-sn-glycero-3-phosphocholine + H2O = a 1-acyl-sn-glycero-3-phosphocholine + a fatty acid + H(+). In terms of biological role, snake venom phospholipase A2 (PLA2) that induces myonecrosis and edema upon subcutaneous injections in mice. In vitro, causes a potent blockade of neuromuscular transmission in young chicken biventer cervicis preparation and produces cytotoxicity in murine C2C12 skeletal muscle myotubes and lack cytolytic activity upon myoblasts in vitro. PLA2 catalyzes the calcium-dependent hydrolysis of the 2-acyl groups in 3-sn-phosphoglycerides. This chain is Basic phospholipase A2 Cdr-13, found in Crotalus durissus ruruima (South American rattlesnake).